Consider the following 710-residue polypeptide: Polyribonucleotide nucleotidyltransferase (710 aa).

Mg(2+) contacts are provided by Asp-487 and Asp-493. The KH domain maps to 554–613; sequence PRIEVMNIPVDKIREVIGSGGKVIREIVEKTGAKINIEDDGTVKIASSSGKEIEAARKWI. Positions 623 to 691 constitute an S1 motif domain; sequence GQIYEGTVVK…ERGKVRLSMK (69 aa).

Belongs to the polyribonucleotide nucleotidyltransferase family. It depends on Mg(2+) as a cofactor.

It localises to the cytoplasm. It catalyses the reaction RNA(n+1) + phosphate = RNA(n) + a ribonucleoside 5'-diphosphate. Involved in mRNA degradation. Catalyzes the phosphorolysis of single-stranded polyribonucleotides processively in the 3'- to 5'-direction. This Rhizobium rhizogenes (strain K84 / ATCC BAA-868) (Agrobacterium radiobacter) protein is Polyribonucleotide nucleotidyltransferase.